The following is a 666-amino-acid chain: Kinesin-like protein Nod (666 aa).

The region spanning 8-320 (AVRIAVREAP…LRFGTSAKKL (313 aa)) is the Kinesin motor domain. An ATP-binding site is contributed by 87-94 (GQTGTGKS). The tract at residues 423-450 (GFHSDSDKDRHLMPPPTGQEPRQASSQN) is disordered. Positions 639 to 666 (ENLFQVKSLPIWSGNKWERFCQINCLDT) form a coiled coil.

Belongs to the TRAFAC class myosin-kinesin ATPase superfamily. Kinesin family. In terms of tissue distribution, in adult female, found in meiotically active ovaries.

It localises to the cytoplasm. Its subcellular location is the cytoskeleton. Its function is as follows. Required for the distributive chromosome segregation of non-exchange chromosomes during meiosis. May be a microtubule motor required to hold distributively 'paired' chromosomes at the metaphase plate until anaphase. This Drosophila melanogaster (Fruit fly) protein is Kinesin-like protein Nod (nod).